The chain runs to 249 residues: Derlin-2.2 (249 aa).

Residues 1 to 21 are Cytoplasmic-facing; the sequence is MAQAVEEWYRQMPIITRSYLT. A helical membrane pass occupies residues 22–42; it reads AAVVTTVGCTLEIISPYHLYL. At 43-96 the chain is on the lumenal side; it reads NPKLVVQHYEIWRLVTNFLYFRKMDLDFLFHMFFLARYCKLLEENSFRGRTADF. Residues 97-117 traverse the membrane as a helical segment; the sequence is FYMLLFGATVLTGIVLIGGMI. The Cytoplasmic segment spans residues 118–122; the sequence is PYISE. A helical transmembrane segment spans residues 123 to 143; sequence TFARILFLSNSLTFMMVYVWS. Topologically, residues 144–152 are lumenal; sequence KHNPFIHMS. The helical transmembrane segment at 153–173 threads the bilayer; sequence FLGLFTFTAAYLPWVLLGFSI. The Cytoplasmic segment spans residues 174–249; the sequence is LVGSSTWVDL…GAIGVDPQAQ (76 aa).

This sequence belongs to the derlin family. In terms of tissue distribution, expressed in roots, stalks, leaves, immature ears, embryo and endosperm.

It is found in the endoplasmic reticulum membrane. May be involved in the degradation process of specific misfolded endoplasmic reticulum (ER) luminal proteins. The protein is Derlin-2.2 (DER2.2) of Zea mays (Maize).